The following is a 144-amino-acid chain: MRKILLFATVIGFLIMVSGTLSYFYDVESQRSTFKSGHWASEIYPTVSFVKKESPVKIDFYGKPNEEYSYDVIFRIVDAPGIPKLSWDGDDFVQFSLRKNVNDWEVGMHLSPQTNGTYVGELTISYPSYPYKVVEIPVTITLEE.

Positions Met-1–Tyr-23 are cleaved as a signal peptide.

This is an uncharacterized protein from Archaeoglobus fulgidus (strain ATCC 49558 / DSM 4304 / JCM 9628 / NBRC 100126 / VC-16).